We begin with the raw amino-acid sequence, 108 residues long: Pumilarin (108 aa).

A propeptide spanning residues 1–38 (MTETKNEIKLHVLFGALAVGFLMLALFSFSLQMLPVAD) is cleaved from the precursor. Positions 39–108 (LAKEFGIPGS…KKGRKAVIAW (70 aa)) form a cross-link, cyclopeptide (Leu-Trp).

The cross-link permits a high resistance to proteolysis. Is more resistant to specific proteases than to unspecific proteases.

It is found in the secreted. Cyclopeptide antibiotic that inhibits both Gram-positive and Gram-negative bacteria. Shows potent to weak activities against M.flavus (MIC=3 ug/ml), B.cereus (MIC=12 ug/ml), B.pumilus (MIC=12 ug/ml), E.coli (MIC=12 ug/ml), and S.pneumoniae (MIC=47 ug/ml). May act by forming pores. The polypeptide is Pumilarin (Bacillus safensis).